Consider the following 366-residue polypeptide: UPF0329 protein ECU01_0130/ECU01_1480/ECU08_0060 (366 aa).

The segment at 325–366 is disordered; that stretch reads IRKEEKRIRKEEERAKNEEELLRMVESEEGKSGEGEEGCRRG.

The protein belongs to the UPF0329 family.

This chain is UPF0329 protein ECU01_0130/ECU01_1480/ECU08_0060, found in Encephalitozoon cuniculi (strain GB-M1) (Microsporidian parasite).